A 220-amino-acid polypeptide reads, in one-letter code: Cell division protein DedD (220 aa).

The helical transmembrane segment at 9-29 threads the bilayer; it reads LVGTIVLVALGVIVLPGLLDG. Disordered stretches follow at residues 46-84 and 97-137; these read KAGD…AAPS and FEPE…EEKA. The span at 57 to 70 shows a compositional bias: low complexity; it reads PAATQALPTQPPEG. The span at 100–109 shows a compositional bias: pro residues; sequence EPAPVAPPKP. 2 stretches are compositionally biased toward basic and acidic residues: residues 110-119 and 127-137; these read KPVEPPKPKV and PEPKPVVEEKA. Residues 138-217 form the SPOR domain; the sequence is APTGKAYVVQ…SGLSGVVMGY (80 aa).

It belongs to the DedD family.

Its subcellular location is the cell inner membrane. In terms of biological role, non-essential cell division protein that could be required for efficient cell constriction. The sequence is that of Cell division protein DedD from Escherichia coli (strain K12).